Consider the following 303-residue polypeptide: HTH-type transcriptional regulator YjiE (303 aa).

An HTH lysR-type domain is found at 11–68; that stretch reads IETKWLYDFLTLEKCRNFSQAAVSRNVSQPAFSRRIRALEQAIGVELFNRQVTPLQLS. Residues 28-47 constitute a DNA-binding region (H-T-H motif); sequence FSQAAVSRNVSQPAFSRRIR.

The protein belongs to the LysR transcriptional regulatory family. As to quaternary structure, forms dimers, tetramers and possibly dodecameric complexes; oligomerization may be governed by cellular concentrations. DNA-binding seems to decrease oligomerization.

Functionally, protects cells from HOCl (hypochlorite) stress but not peroxide or diamide stress. Decreases the intracellular load of reactive oxygen species by up-regulating genes involved in methionine and cysteine biosynthesis and down-regulating Fur-regulated genes involved in iron acquisition. Has also been suggested to down-regulate expression of the flagellar regulon, decreasing motility, but this activity was not confirmed in a second study. The polypeptide is HTH-type transcriptional regulator YjiE (yjiE) (Escherichia coli (strain K12)).